The primary structure comprises 1198 residues: MAEHPPLLDTSSIISSEIPLLTSPIVSGDGAQQVILVQVNPGEAFTIRREDGQFQCITGPAQVPMMSPNGSVPTIYVPPGYAPQVIEDNGVRRVVVVPQAPEFHPGGHAVIHRPPHPPLPGFLPLPAMIPPPPRHIYSPVTGAGDMATQYIPQYHTSQMYGDLDTLPAHGRANFRDERSSKTYERLQKKLKDRHGTQKDKLNSPPSSPQKCPSPTSEPNGLTKGQDTAGISTGSTKSKSVGKGKSNSQTDVEIEEKDEETKALEALLSNIAKPVVSDVQARTALLMWSPPSIDVGEDTDKTNIPGVYTYEVMISNTGKDGKYKTVYIGEENKVTVNDLRPATDYHAKVQVECNCVKGSPSEVESFTTMSCEPDAPNLPRITNRTKNSLTLQWKASCDNGSKIHSYLLEWDEGKGNGEFCQCYYGQQKQYRITKLSPAMGYTFRLAAKNDMGMSGFSEEVLYHTSGTAATTPASPLLINAGVTWLSLQWTKPSGTPSDEGISYILEMEDENSGYGFKPKYDGDDLTYTVKNLRRSTKYKFRVIAYNSEGKSSPSETVDYTTCPDKPGAPSKPSVKGKIHAQSFKIIWDPPKDNGGAAINTYVVEISEGSNGNKWDTIYSGAAREHLCDRLNPGCSYRLRVYCIGEGGQSMASDSLLVQTPAVVPGPCQPPRLQGRPRAREIQLRWGPPQVDGGSPITCYGLEMFQTETDEHREVYQGSDVECTVGSLLPGRMYNFRLRAANKAGFGPYSEKCEITTAPGPPDQCKPPQVTCRSAACAQVSWEVPVSNGADVTEYRLEWGGMEGCMQISYCGPGLNCEMKGLLPATIYYCRVQAVNVAGAGPFSEVVACMTPASVPAVVTCLRGLSEDEVESPHYYPSTCLALSWEKPCDHGSEITGYSIDFGDKQPITVGKVLSYFIDGLQPDTTYRIRIQALNSLGAGPFSHTIKLKTKPLPPDPPRLECVAYSSQTLKLKWGEGTAKALTDSIQYHLQMEDKNGRFVSLYRGPCHTYKVQRLSESTSYKFCIQACNEAGEGPLSQEYVFTTPKSVPAALKAPRIERINDHTCEITWEVLQPMKGDPVIYCLQVMVGKDSEFKQIYKGPDWSFRYTGLQLNCEYRFRACAIRQCQETSGHQDLIGPYSSPVLFISQRTEPPTSTNKDTVQTTRTQWSQSDQVCAAVILALFAIFSILIAVIIQYFVIK.

The span at K189–L201 shows a compositional bias: basic and acidic residues. Positions K189–K256 are disordered. Residues G229–S247 are compositionally biased toward low complexity. 9 consecutive Fibronectin type-III domains span residues N269 to C370, A374 to T466, T470 to D563, A567 to V661, P665 to G758, Q762 to S852, S864 to L951, P952 to S1045, and V1046 to P1151. The segment at S553–K574 is disordered. The helical transmembrane segment at V1172–I1192 threads the bilayer.

This sequence belongs to the FNDC3 family.

Its subcellular location is the golgi apparatus membrane. This is Fibronectin type-III domain-containing protein 3a (FNDC3A) from Gallus gallus (Chicken).